The chain runs to 135 residues: Sex-regulated protein janus-A (135 aa).

A substrate-binding site is contributed by lysine 37. The active-site Proton acceptor is the histidine 63. 104–106 contacts substrate; that stretch reads SQG.

This sequence belongs to the janus family.

Its function is as follows. JanA and janB regulate somatic sex differentiation. This Drosophila mauritiana (Fruit fly) protein is Sex-regulated protein janus-A (janA).